Here is a 64-residue protein sequence, read N- to C-terminus: Translation machinery-associated protein 7 homolog (64 aa).

The disordered stretch occupies residues 1–64 (MSGREGGKKK…QGGIKKSGKK (64 aa)). Residues 21-50 (EMDEDTAAFKAKQKEQQKALEAAKQKATKG) are a coiled coil. The span at 32 to 44 (KQKEQQKALEAAK) shows a compositional bias: basic and acidic residues.

It belongs to the TMA7 family.

This Anopheles gambiae (African malaria mosquito) protein is Translation machinery-associated protein 7 homolog.